The sequence spans 156 residues: Small ribosomal subunit protein uS7 (156 aa).

The protein belongs to the universal ribosomal protein uS7 family. As to quaternary structure, part of the 30S ribosomal subunit. Contacts proteins S9 and S11.

Its function is as follows. One of the primary rRNA binding proteins, it binds directly to 16S rRNA where it nucleates assembly of the head domain of the 30S subunit. Is located at the subunit interface close to the decoding center, probably blocks exit of the E-site tRNA. In Bacillus velezensis (strain DSM 23117 / BGSC 10A6 / LMG 26770 / FZB42) (Bacillus amyloliquefaciens subsp. plantarum), this protein is Small ribosomal subunit protein uS7.